Consider the following 464-residue polypeptide: Argininosuccinate lyase (464 aa).

Belongs to the lyase 1 family. Argininosuccinate lyase subfamily.

Its subcellular location is the cytoplasm. It carries out the reaction 2-(N(omega)-L-arginino)succinate = fumarate + L-arginine. Its pathway is amino-acid biosynthesis; L-arginine biosynthesis; L-arginine from L-ornithine and carbamoyl phosphate: step 3/3. This Desulfotalea psychrophila (strain LSv54 / DSM 12343) protein is Argininosuccinate lyase.